The sequence spans 304 residues: Cell surface-binding protein OPG105 (304 aa).

In terms of domain architecture, Alpha-carbonic anhydrase spans 1–235 (MPQQLSPINI…NDDTQVYYSG (235 aa)). The Virion surface portion of the chain corresponds to 1–275 (MPQQLSPINI…YQKYIEENKT (275 aa)). The chain crosses the membrane as a helical span at residues 276-294 (FAIIAIVFVFILTAILFFM). At 295-304 (SRRYSREKQN) the chain is on the intravirion side.

The protein belongs to the alpha-carbonic anhydrase family. Homodimer; disulfide-linked. In terms of processing, apparently non-glycosylated.

It is found in the virion membrane. Functionally, binds to chondroitin sulfate on the cell surface to provide virion attachment to target cell. The polypeptide is Cell surface-binding protein OPG105 (OPG105) (Homo sapiens (Human)).